Reading from the N-terminus, the 192-residue chain is Adapter protein MecA (192 aa).

The protein belongs to the MecA family. As to quaternary structure, homodimer.

Functionally, enables the recognition and targeting of unfolded and aggregated proteins to the ClpC protease or to other proteins involved in proteolysis. Acts negatively in the development of competence by binding ComK and recruiting it to the ClpCP protease. When overexpressed, inhibits sporulation. Also involved in Spx degradation by ClpC. The chain is Adapter protein MecA from Oceanobacillus iheyensis (strain DSM 14371 / CIP 107618 / JCM 11309 / KCTC 3954 / HTE831).